Reading from the N-terminus, the 375-residue chain is Chaperone protein DnaJ (375 aa).

The J domain maps to 5 to 70 (DFYEVLGVER…SKRAAYDQYG (66 aa)). The CR-type zinc finger occupies 134–212 (GTTVSIRVPT…CHGEGRVEEY (79 aa)). 8 residues coordinate Zn(2+): C147, C150, C164, C167, C186, C189, C200, and C203. CXXCXGXG motif repeat units follow at residues 147–154 (CKPCDGSG), 164–171 (CPTCGGIG), 186–193 (CPRCHGQG), and 200–207 (CNSCHGEG).

The protein belongs to the DnaJ family. In terms of assembly, homodimer. The cofactor is Zn(2+).

It localises to the cytoplasm. Its function is as follows. Participates actively in the response to hyperosmotic and heat shock by preventing the aggregation of stress-denatured proteins and by disaggregating proteins, also in an autonomous, DnaK-independent fashion. Unfolded proteins bind initially to DnaJ; upon interaction with the DnaJ-bound protein, DnaK hydrolyzes its bound ATP, resulting in the formation of a stable complex. GrpE releases ADP from DnaK; ATP binding to DnaK triggers the release of the substrate protein, thus completing the reaction cycle. Several rounds of ATP-dependent interactions between DnaJ, DnaK and GrpE are required for fully efficient folding. Also involved, together with DnaK and GrpE, in the DNA replication of plasmids through activation of initiation proteins. The sequence is that of Chaperone protein DnaJ from Pseudomonas entomophila (strain L48).